A 240-amino-acid polypeptide reads, in one-letter code: Zein-alpha 19C1 (240 aa).

The N-terminal stretch at 1-21 (MATKIFSLLMLLALSACVANA) is a signal peptide.

The protein belongs to the zein family.

Functionally, zeins are major seed storage proteins. The polypeptide is Zein-alpha 19C1 (Zea mays (Maize)).